The primary structure comprises 37 residues: Serrulin (37 aa).

Residues 16–37 (FGGGGIGGGGFGGGYGGGKIKG) are disordered. Lysine 36 is modified (lysine amide).

Expressed in hemocytes (at protein level).

Its subcellular location is the secreted. Its function is as follows. Antimicrobial protein with activity against Gram-positive and Gram-negative bacteria, filamentous fungus, and yeast. Was tested against Micrococcus luteus A270 (MIC=0.5-1 uM), Echerichia coli SBS 363 (MIC=9-16 uM), Pseudomonas aeruginosa (MIC=0.01-0.3 uM), Aspergillus niger (MIC=3-6 uM), and Candida albicans MDM8 (MIC=1.5-3 uM). Has no hemolytic activity against human erythrocytes. In Tityus serrulatus (Brazilian scorpion), this protein is Serrulin.